Reading from the N-terminus, the 521-residue chain is Type II methyltransferase M.AluI (521 aa).

The SAM-dependent MTase C5-type domain occupies 8–491 (YSFVDLFAGI…REHVRRDRAL (484 aa)). Cysteine 84 is a catalytic residue.

Belongs to the class I-like SAM-binding methyltransferase superfamily. C5-methyltransferase family.

The catalysed reaction is a 2'-deoxycytidine in DNA + S-adenosyl-L-methionine = a 5-methyl-2'-deoxycytidine in DNA + S-adenosyl-L-homocysteine + H(+). Its function is as follows. A methylase, recognizes the double-stranded sequence 5'-AGCT-3', methylates C-3 on both strands, and protects the DNA from cleavage by the AluI endonuclease. The protein is Type II methyltransferase M.AluI of Cellulosimicrobium cellulans (Arthrobacter luteus).